The following is a 703-amino-acid chain: Stonustoxin subunit alpha (703 aa).

A structural MACPF/CDC pore-forming domain region spans residues 2 to 265 (SSDLVMPALG…KAQQLIQEIN (264 aa)). The interval 266–385 (VSKVRRIHTT…GMVEGTQAKF (120 aa)) is structural FAT domain. The interval 386 to 517 (VSNQTELDRE…PRMPFVQGYK (132 aa)) is thioredoxin (THX) domain. A B30.2/SPRY domain is found at 508-703 (PRMPFVQGYK…AGNHGTLRLL (196 aa)).

This sequence belongs to the SNTX/VTX toxin family. As to quaternary structure, heterodimer of alpha and beta subunits; non-covalently linked. Post-translationally, intrachain disulfide bonds may be present in the heterodimer. In terms of processing, not glycosylated. In terms of tissue distribution, expressed by the venom gland.

It is found in the secreted. In terms of biological role, this lethal (towards mammals) heterodimer induces hemolytic activities due to its ability to form pores in the cell membrane. The pore may be composed of 10 SNTX-alpha/beta heterodimers. The toxin elicits potent hypotension which is endothelium-dependent and appears to be mediated by the nitric oxide pathway and activation of potassium channels. In addition, it displays edema-inducing activities, increases vascular permeability. It also shows myotoxic activities and interferes irreversibly with neuromuscular function. It also induces irreversible platelet aggregation in rabbit or rat (but not in human or mouse) whole blood. In addition, it has been observed to increase spontaneous quantal acetylcholine release from isolated frog cutaneous pectoris motor endings. In Synanceia horrida (Estuarine stonefish), this protein is Stonustoxin subunit alpha.